Here is a 268-residue protein sequence, read N- to C-terminus: Eukaryotic translation initiation factor 2 subunit beta (268 aa).

A compositionally biased stretch (basic and acidic residues) spans 1 to 12 (MADEINEIREEQ). Residues 1–85 (MADEINEIRE…LNNESVDAGE (85 aa)) form a disordered region. Position 2 is an N-acetylalanine (alanine 2). Residues serine 42, serine 80, and serine 112 each carry the phosphoserine; by CK2 modification. The segment at 222–246 (CLGCKSPDTILSKENRLFFLRCEKC) adopts a C4-type zinc-finger fold.

It belongs to the eIF-2-beta/eIF-5 family. As to quaternary structure, eukaryotic translation initiation factor 2 eIF2 is a heterotrimeric complex composed of an alpha, a beta and a gamma subunit. Phosphorylated at Ser-42, Ser-80 and Ser-112 by CK2.

The protein localises to the cytoplasm. It is found in the cytosol. Component of the eIF2 complex that functions in the early steps of protein synthesis by forming a ternary complex with GTP and initiator tRNA. This complex binds to a 40S ribosomal subunit, followed by mRNA binding to form a 43S pre-initiation complex (43S PIC). Junction of the 60S ribosomal subunit to form the 80S initiation complex is preceded by hydrolysis of the GTP bound to eIF2 and release of an eIF2-GDP binary complex. In order for eIF2 to recycle and catalyze another round of initiation, the GDP bound to eIF2 must exchange with GTP by way of a reaction catalyzed by eIF2B. This chain is Eukaryotic translation initiation factor 2 subunit beta, found in Arabidopsis thaliana (Mouse-ear cress).